A 279-amino-acid chain; its full sequence is Oxygen-dependent coproporphyrinogen-III oxidase (279 aa).

Ser-102 serves as a coordination point for substrate. A divalent metal cation-binding residues include His-106 and His-116. His-116 serves as the catalytic Proton donor. Residue 118-120 (NTR) participates in substrate binding. His-149 and His-179 together coordinate a divalent metal cation. The important for dimerization stretch occupies residues 244–279 (YVEFNLLYDRGTKFGLMTDGNVEAILMSLPPEVKWA).

It belongs to the aerobic coproporphyrinogen-III oxidase family. Homodimer. The cofactor is a divalent metal cation.

The protein localises to the cytoplasm. It carries out the reaction coproporphyrinogen III + O2 + 2 H(+) = protoporphyrinogen IX + 2 CO2 + 2 H2O. It functions in the pathway porphyrin-containing compound metabolism; protoporphyrin-IX biosynthesis; protoporphyrinogen-IX from coproporphyrinogen-III (O2 route): step 1/1. Involved in the heme biosynthesis. Catalyzes the aerobic oxidative decarboxylation of propionate groups of rings A and B of coproporphyrinogen-III to yield the vinyl groups in protoporphyrinogen-IX. The polypeptide is Oxygen-dependent coproporphyrinogen-III oxidase (Rickettsia bellii (strain OSU 85-389)).